Consider the following 1076-residue polypeptide: GPI inositol-deacylase A (1076 aa).

A helical membrane pass occupies residues 3-23 (IATFPALAITALALVLWATVA). 2 N-linked (GlcNAc...) asparagine glycosylation sites follow: Asn48 and Asn119. The active site involves Ser240. N-linked (GlcNAc...) asparagine glycosylation is present at Asn404. A run of 2 helical transmembrane segments spans residues 765–785 (FLGFYRVMFAIFPMFVFLCLL) and 815–835 (WILAGSCAIPFVPHVLVSLLY). N-linked (GlcNAc...) asparagine glycosylation occurs at Asn849. 3 helical membrane passes run 855-875 (FLGPVSLVIATGIVVVLHWLL), 877-897 (ILTLWVCQCYYMLGLAPIAPE), and 910-930 (FLLLLVFKIVPHQFAFMVAVL). 2 N-linked (GlcNAc...) asparagine glycosylation sites follow: Asn952 and Asn966. A run of 3 helical transmembrane segments spans residues 970 to 990 (SLLLLLVLLLPINAPTLVVWL), 1006 to 1026 (EVSAILPILLLVLTASRGIMI), and 1035 to 1055 (IYATFAFLAYFALFVLFHGVV).

It belongs to the GPI inositol-deacylase family.

Its subcellular location is the endoplasmic reticulum membrane. Its function is as follows. Involved in inositol deacylation of GPI-anchored proteins which plays important roles in the quality control and ER-associated degradation of GPI-anchored proteins. The sequence is that of GPI inositol-deacylase A (BST1A) from Yarrowia lipolytica (strain CLIB 122 / E 150) (Yeast).